A 241-amino-acid polypeptide reads, in one-letter code: MLFNSLLTNFAALEVGQHLYWQIGNIRLHGQVFLTSWILLGALLVFISLGTKKMENDPKGLQNLLEFLWDYIRDLARTQIGEKVYRDWMPFIGTLFLFVFVSNWGGALIPWRLIKLPSGELGAPTADINTTIALALLVSLSYFYAGLSNKGWRYFEYYVHPTPIMLPFKILEDFTKPLSLSFRLFGNILADELVVGVLVFLVPLILPIPVMFLGLFTSAIQALIFATLAAYYIGEAVEEHH.

5 helical membrane-spanning segments follow: residues Gly30 to Gly50, Phe91 to Trp111, Ile128 to Ser148, Leu193 to Leu213, and Gly214 to Gly234.

It belongs to the ATPase A chain family. As to quaternary structure, F-type ATPases have 2 components, CF(1) - the catalytic core - and CF(0) - the membrane proton channel. CF(1) has five subunits: alpha(3), beta(3), gamma(1), delta(1), epsilon(1). CF(0) has four main subunits: a, b, b' and c.

It is found in the cellular thylakoid membrane. In terms of biological role, key component of the proton channel; it plays a direct role in the translocation of protons across the membrane. The protein is ATP synthase subunit a of Prochlorococcus marinus (strain MIT 9312).